Here is a 525-residue protein sequence, read N- to C-terminus: GMP synthase [glutamine-hydrolyzing] (525 aa).

In terms of domain architecture, Glutamine amidotransferase type-1 spans 9-207; it reads RILILDFGSQ…ILDICGCEAL (199 aa). The active-site Nucleophile is Cys-86. Residues His-181 and Glu-183 contribute to the active site. One can recognise a GMPS ATP-PPase domain in the interval 208–400; it reads WTPSKIAEDA…LGLPYDMVYR (193 aa). An ATP-binding site is contributed by 235–241; it reads SGGVDSS.

In terms of assembly, homodimer.

It carries out the reaction XMP + L-glutamine + ATP + H2O = GMP + L-glutamate + AMP + diphosphate + 2 H(+). The protein operates within purine metabolism; GMP biosynthesis; GMP from XMP (L-Gln route): step 1/1. Catalyzes the synthesis of GMP from XMP. This is GMP synthase [glutamine-hydrolyzing] from Pseudomonas savastanoi pv. phaseolicola (strain 1448A / Race 6) (Pseudomonas syringae pv. phaseolicola (strain 1448A / Race 6)).